We begin with the raw amino-acid sequence, 221 residues long: Ribosomal RNA small subunit methyltransferase Nep1 (221 aa).

Residues Gly174, Gly179, and 196–201 each bind S-adenosyl-L-methionine; that span reads LGEVAM.

Belongs to the class IV-like SAM-binding methyltransferase superfamily. RNA methyltransferase NEP1 family. As to quaternary structure, homodimer.

It catalyses the reaction a pseudouridine in rRNA + S-adenosyl-L-methionine = an N(1)-methylpseudouridine in rRNA + S-adenosyl-L-homocysteine + H(+). Its function is as follows. Methyltransferase involved in ribosomal biogenesis. Specifically catalyzes the N1-methylation of the pseudouridine corresponding to position 914 in M.jannaschii 16S rRNA. The chain is Ribosomal RNA small subunit methyltransferase Nep1 from Pyrobaculum arsenaticum (strain DSM 13514 / JCM 11321 / PZ6).